The sequence spans 1017 residues: MSKPMDVEQEPKIDDALYSRQLYALSHETMKKITSTSVLVVGLQGLGIEIVKDLSLAGVKSVTLYDKELVEIKDLSSQFYFSPEQVGKVGRADACFQKVVDLNNYVRIDVHNGELSDEFLKKFNVVVLANQPLALQLKVNEFCHANKIHFISVETRGVFGQLFNDFGEQFTITDTNGENPNAYMISSISQDKEGIVTVVEEQKLQLLDGDLVTFKEVNGMSALNDLPPQKIKTISPLTFSIGDTTNLPPYTSGGYVTEVKQPKVVDFKPLKNILESGENIFITDDFKFTQPTNLLAGFQAIHKFAEKNKHMPRPHNKEDANAVIEIAKGLLKKPDDELDEKMITQLSFGAQGDIVPMQAILGGITAQEVLKACSGKFTPIHQLAFFDSVECLPEDLETLPEEEFQPIGSRYDGQIITFGKTLQNKIENLNYFLVGAGAIGCEMLKNFAMMGLGAGPKGLVHVTDMDTIEKSNLNRQFLFRSSDIQQLKSQTAANAVRVMNPDLNVKAYSLRVGPDTESHYNEEFFNSLDGVCNALDNVEARLYMDSQCVYYGKPLLESGTLGTKGNTQVVVPHLTESYSSSRDPPEKGIPVCTLHNFPNAIEHTIQWARDTFEGLFKNNADNVNSYLTNPAYVQSLKTQNPFVRLETLASIKASLMDRPLDFNQCIAWARLKFEEYFNNNIEQLLYNFPKDMVTTTGTPFWSGPKRAPTPLKFDVENPLHLEFIVAAANLRAFNYGIKAETNIEVIQKQAANVIVPDFTPKKVKIQTSENEPAPSSNTQQAGGDAEDDQCDTILSQLPQPSEMAGYKINSIQFEKDDDTNHHIDFITATSNLRATNYAISPADKHKTKGIAGKIIPALVTTTAVVAGFVCIELIKVIQNKALEKYKSTFMNLGIPFFGFVEPIAAPKNKIREGWTWTLWDRFDVDGDITLKEFLDLFEKKHGLDISMLSCKVTLLYALFTDKKTKEERLKMKISQLYETLSKKPLPKDKKYLLLEICCNDTETGDDVDVPSVRYKYN.

Repeat copies occupy residues 26–163 (SHET…GQLF) and 419–571 (GKTL…QVVV). The 2 approximate repeats stretch occupies residues 26–571 (SHETMKKITS…GTKGNTQVVV (546 aa)). Residues Ala438, Asp464, Arg475, Lys488, and 536–537 (DN) each bind ATP. The Glycyl thioester intermediate role is filled by Cys592. Polar residues predominate over residues 765–781 (IQTSENEPAPSSNTQQA). A disordered region spans residues 765-788 (IQTSENEPAPSSNTQQAGGDAEDD).

It belongs to the ubiquitin-activating E1 family. Monomer.

It catalyses the reaction ATP + ubiquitin + [E1 ubiquitin-activating enzyme]-L-cysteine = AMP + diphosphate + S-ubiquitinyl-[E1 ubiquitin-activating enzyme]-L-cysteine.. The protein operates within protein modification; protein ubiquitination. Catalyzes the first step in ubiquitin conjugation to mark cellular proteins for degradation through the ubiquitin-proteasome system. Activates ubiquitin by first adenylating its C-terminal glycine residue with ATP, and thereafter linking this residue to the side chain of a cysteine residue in E1, yielding a ubiquitin-E1 thioester and free AMP. This chain is Ubiquitin-like modifier-activating enzyme 1 (uba1), found in Dictyostelium discoideum (Social amoeba).